The chain runs to 803 residues: Phenylalanine--tRNA ligase beta subunit (803 aa).

Positions 39-151 constitute a tRNA-binding domain; the sequence is SMKFSGIKIG…KNAIIGEDIK (113 aa). A B5 domain is found at 406–482; the sequence is PKKILIKLYK…RFYGFEKIPI (77 aa). Residues Asp466 and Asp470 each coordinate Mg(2+). Residues 707 to 800 form the FDX-ACB domain; that stretch reads SDIPFNYRDI…LKKNFLIEIR (94 aa).

It belongs to the phenylalanyl-tRNA synthetase beta subunit family. Type 1 subfamily. As to quaternary structure, tetramer of two alpha and two beta subunits. Requires Mg(2+) as cofactor.

It localises to the cytoplasm. It catalyses the reaction tRNA(Phe) + L-phenylalanine + ATP = L-phenylalanyl-tRNA(Phe) + AMP + diphosphate + H(+). The sequence is that of Phenylalanine--tRNA ligase beta subunit from Wigglesworthia glossinidia brevipalpis.